We begin with the raw amino-acid sequence, 254 residues long: Leucyl/phenylalanyl-tRNA--protein transferase (254 aa).

The protein belongs to the L/F-transferase family.

It is found in the cytoplasm. The catalysed reaction is N-terminal L-lysyl-[protein] + L-leucyl-tRNA(Leu) = N-terminal L-leucyl-L-lysyl-[protein] + tRNA(Leu) + H(+). It carries out the reaction N-terminal L-arginyl-[protein] + L-leucyl-tRNA(Leu) = N-terminal L-leucyl-L-arginyl-[protein] + tRNA(Leu) + H(+). The enzyme catalyses L-phenylalanyl-tRNA(Phe) + an N-terminal L-alpha-aminoacyl-[protein] = an N-terminal L-phenylalanyl-L-alpha-aminoacyl-[protein] + tRNA(Phe). Its function is as follows. Functions in the N-end rule pathway of protein degradation where it conjugates Leu, Phe and, less efficiently, Met from aminoacyl-tRNAs to the N-termini of proteins containing an N-terminal arginine or lysine. The protein is Leucyl/phenylalanyl-tRNA--protein transferase of Burkholderia cenocepacia (strain HI2424).